Consider the following 245-residue polypeptide: 1-(5-phosphoribosyl)-5-[(5-phosphoribosylamino)methylideneamino] imidazole-4-carboxamide isomerase (245 aa).

The active-site Proton acceptor is D12. D131 acts as the Proton donor in catalysis.

Belongs to the HisA/HisF family.

The protein resides in the cytoplasm. The enzyme catalyses 1-(5-phospho-beta-D-ribosyl)-5-[(5-phospho-beta-D-ribosylamino)methylideneamino]imidazole-4-carboxamide = 5-[(5-phospho-1-deoxy-D-ribulos-1-ylimino)methylamino]-1-(5-phospho-beta-D-ribosyl)imidazole-4-carboxamide. The protein operates within amino-acid biosynthesis; L-histidine biosynthesis; L-histidine from 5-phospho-alpha-D-ribose 1-diphosphate: step 4/9. The chain is 1-(5-phosphoribosyl)-5-[(5-phosphoribosylamino)methylideneamino] imidazole-4-carboxamide isomerase from Thermobifida fusca (strain YX).